A 623-amino-acid polypeptide reads, in one-letter code: Heterogeneous nuclear ribonucleoprotein L (623 aa).

Positions 1–16 are enriched in basic residues; that stretch reads MSRRLLPRAEKRRRRL. The disordered stretch occupies residues 1 to 97; it reads MSRRLLPRAE…NYDDPHKTPA (97 aa). Basic and acidic residues predominate over residues 17-27; that stretch reads EQRQQPDEQLR. Residues 28–37 show a composition bias toward low complexity; that stretch reads RAGAMVKMAA. Residues 38–54 show a composition bias toward gly residues; it reads AGGGGGGGRYYGGGNEG. Residues K59 and K62 each participate in a glycyl lysine isopeptide (Lys-Gly) (interchain with G-Cter in SUMO2) cross-link. A compositionally biased stretch (gly residues) spans 69–87; that stretch reads QHGGGGGGGSGAAGGGGGE. The residue at position 98 (S98) is a Phosphoserine. In terms of domain architecture, RRM 1 spans 99–173; that stretch reads PVVHIRGLID…HPAFVNYSTS (75 aa). K133 participates in a covalent cross-link: Glycyl lysine isopeptide (Lys-Gly) (interchain with G-Cter in SUMO2). The residue at position 182 (S182) is a Phosphoserine. In terms of domain architecture, RRM 2 spans 190–267; sequence SVLLFTILNP…CTLKIEYAKP (78 aa). At K266 the chain carries N6-acetyllysine. The segment covering 281 to 298 has biased composition (polar residues); sequence DYTNPNLSGQGDPGSNPN. The tract at residues 281–413 is disordered; it reads DYTNPNLSGQ…PPPPDYGPHA (133 aa). 2 positions are modified to phosphoserine: S288 and S295. Residue K299 forms a Glycyl lysine isopeptide (Lys-Gly) (interchain with G-Cter in SUMO2) linkage. Residues R388 and R392 each carry the asymmetric dimethylarginine modification. A compositionally biased stretch (pro residues) spans 398-409; that stretch reads GHPPPPPPPPDY. S415 carries the phosphoserine modification. RRM domains follow at residues 416 to 490 and 498 to 586; these read PVLM…VSKQ and SYGL…WDSK. S578 bears the Phosphoserine; by CaMK4 mark. A Glycyl lysine isopeptide (Lys-Gly) (interchain with G-Cter in SUMO2) cross-link involves residue K602.

Identified in a IGF2BP1-dependent mRNP granule complex containing untranslated mRNAs. Interacts with HNRNPLL. Interacts with APEX1; the interaction is DNA-dependent. Component of a complex with SETD2. Interacts with ELAVL1. Part of a transcription inhibitory ribonucleoprotein complex composed at least of the circular RNA circZNF827, ZNF827 and HNRNPK. Interacts with CHD8 in an RNA-dependent manner. Post-translationally, several isoelectric forms of the L protein are probably the results of post-translational modifications. In terms of processing, phosphorylation at Ser-578 by CaMK4 enhances interaction with a CaMK4-responsive RNA element (CaRRE1), and prevents inclusion of the stress axis-regulated exon (STREX) of the KCNMA1 potassium channel transcripts upon membrane depolarization.

It localises to the nucleus. Its subcellular location is the nucleoplasm. The protein localises to the cytoplasm. In terms of biological role, splicing factor binding to exonic or intronic sites and acting as either an activator or repressor of exon inclusion. Exhibits a binding preference for CA-rich elements. Component of the heterogeneous nuclear ribonucleoprotein (hnRNP) complexes and associated with most nascent transcripts. Associates, together with APEX1, to the negative calcium responsive element (nCaRE) B2 of the APEX2 promoter. As part of a ribonucleoprotein complex composed at least of ZNF827, HNRNPK and the circular RNA circZNF827 that nucleates the complex on chromatin, may negatively regulate the transcription of genes involved in neuronal differentiation. Regulates alternative splicing of a core group of genes involved in neuronal differentiation, likely by mediating H3K36me3-coupled transcription elongation and co-transcriptional RNA processing via interaction with CHD8. The sequence is that of Heterogeneous nuclear ribonucleoprotein L from Rattus norvegicus (Rat).